Here is a 333-residue protein sequence, read N- to C-terminus: Pro-cathepsin H (333 aa).

Positions 1 to 20 are cleaved as a signal peptide; sequence MWAALPLLCAGAWLLSTGAT. Positions 21–95 are cleaved as a propeptide — activation peptide; that stretch reads AELTVNAIEK…AEIKHKFLWS (75 aa). 2 N-linked (GlcNAc...) asparagine glycosylation sites follow: Asn70 and Asn99. 4 disulfides stabilise this stretch: Cys100-Cys325, Cys136-Cys179, Cys170-Cys212, and Cys270-Cys320. The propeptide occupies 104-113; that stretch reads KSNYLRGTGP. The active site involves Cys139. N-linked (GlcNAc...) asparagine glycosylation occurs at Asn228. Active-site residues include His279 and Asn299.

The protein belongs to the peptidase C1 family. As to quaternary structure, composed of a mini chain and a large chain. The large chain may be split into heavy and light chain. All chains are held together by disulfide bonds. As to expression, widely expressed with highest expression found in non-skeletal tissues. Low levels found in skeletal tissue.

The protein localises to the lysosome. The enzyme catalyses Hydrolysis of proteins, acting as an aminopeptidase (notably, cleaving Arg-|-Xaa bonds) as well as an endopeptidase.. Important for the overall degradation of proteins in lysosomes. This Mus musculus (Mouse) protein is Pro-cathepsin H (Ctsh).